Reading from the N-terminus, the 424-residue chain is Tyrosine--tRNA ligase (424 aa).

Residue Y37 coordinates L-tyrosine. The 'HIGH' region motif lies at 42 to 51; that stretch reads PTADSLHLGH. Positions 175 and 179 each coordinate L-tyrosine. Positions 235-239 match the 'KMSKS' region motif; the sequence is KFGKT. K238 provides a ligand contact to ATP. The 58-residue stretch at 357 to 414 folds into the S4 RNA-binding domain; sequence ADLQQALVAAELVPSRGQARTLISSNAVSVNGEKQASIDYVFDDADRLYSRYTLLRRG.

The protein belongs to the class-I aminoacyl-tRNA synthetase family. TyrS type 1 subfamily. In terms of assembly, homodimer.

The protein localises to the cytoplasm. The enzyme catalyses tRNA(Tyr) + L-tyrosine + ATP = L-tyrosyl-tRNA(Tyr) + AMP + diphosphate + H(+). Its function is as follows. Catalyzes the attachment of tyrosine to tRNA(Tyr) in a two-step reaction: tyrosine is first activated by ATP to form Tyr-AMP and then transferred to the acceptor end of tRNA(Tyr). This chain is Tyrosine--tRNA ligase, found in Sodalis glossinidius (strain morsitans).